Here is a 149-residue protein sequence, read N- to C-terminus: Ribonuclease H (149 aa).

Residues Met-1–Asp-145 enclose the RNase H type-1 domain. Positions 9, 50, 72, and 137 each coordinate Mg(2+).

The protein belongs to the RNase H family. In terms of assembly, monomer. Mg(2+) is required as a cofactor.

It localises to the cytoplasm. It carries out the reaction Endonucleolytic cleavage to 5'-phosphomonoester.. Its function is as follows. Endonuclease that specifically degrades the RNA of RNA-DNA hybrids. This chain is Ribonuclease H, found in Clostridium botulinum (strain ATCC 19397 / Type A).